Reading from the N-terminus, the 247-residue chain is Adenosylcobinamide-GDP ribazoletransferase (247 aa).

A run of 6 helical transmembrane segments spans residues 34-54 (IVMFPFIGLILGGISGLIFIL), 59-79 (CGIPLAALFCILALALLTGGF), 113-133 (GGLALIFVLLAKILVVSELAL), 138-158 (MLAALAVACAAGHGSAVLLMY), 171-191 (VFIGKVSGRQTCITLGLAVIV), and 194-214 (VLLPGMQGLATMVVTLAAIFI).

Belongs to the CobS family. It depends on Mg(2+) as a cofactor.

The protein resides in the cell inner membrane. It carries out the reaction alpha-ribazole + adenosylcob(III)inamide-GDP = adenosylcob(III)alamin + GMP + H(+). It catalyses the reaction alpha-ribazole 5'-phosphate + adenosylcob(III)inamide-GDP = adenosylcob(III)alamin 5'-phosphate + GMP + H(+). The protein operates within cofactor biosynthesis; adenosylcobalamin biosynthesis; adenosylcobalamin from cob(II)yrinate a,c-diamide: step 7/7. Functionally, joins adenosylcobinamide-GDP and alpha-ribazole to generate adenosylcobalamin (Ado-cobalamin). Also synthesizes adenosylcobalamin 5'-phosphate from adenosylcobinamide-GDP and alpha-ribazole 5'-phosphate. The protein is Adenosylcobinamide-GDP ribazoletransferase of Salmonella paratyphi A (strain ATCC 9150 / SARB42).